The chain runs to 284 residues: Lipoyl synthase (284 aa).

The [4Fe-4S] cluster site is built by cysteine 38, cysteine 43, cysteine 49, cysteine 64, cysteine 68, cysteine 71, and serine 277. Residues 50–266 (WSRGTATFLL…RDEALGMGFS (217 aa)) enclose the Radical SAM core domain.

This sequence belongs to the radical SAM superfamily. Lipoyl synthase family. [4Fe-4S] cluster is required as a cofactor.

Its subcellular location is the cytoplasm. The catalysed reaction is [[Fe-S] cluster scaffold protein carrying a second [4Fe-4S](2+) cluster] + N(6)-octanoyl-L-lysyl-[protein] + 2 oxidized [2Fe-2S]-[ferredoxin] + 2 S-adenosyl-L-methionine + 4 H(+) = [[Fe-S] cluster scaffold protein] + N(6)-[(R)-dihydrolipoyl]-L-lysyl-[protein] + 4 Fe(3+) + 2 hydrogen sulfide + 2 5'-deoxyadenosine + 2 L-methionine + 2 reduced [2Fe-2S]-[ferredoxin]. The protein operates within protein modification; protein lipoylation via endogenous pathway; protein N(6)-(lipoyl)lysine from octanoyl-[acyl-carrier-protein]: step 2/2. Functionally, catalyzes the radical-mediated insertion of two sulfur atoms into the C-6 and C-8 positions of the octanoyl moiety bound to the lipoyl domains of lipoate-dependent enzymes, thereby converting the octanoylated domains into lipoylated derivatives. This chain is Lipoyl synthase, found in Chlorobium phaeovibrioides (strain DSM 265 / 1930) (Prosthecochloris vibrioformis (strain DSM 265)).